Reading from the N-terminus, the 427-residue chain is Citrate synthase (427 aa).

Catalysis depends on residues His-306 and Asp-363.

The protein belongs to the citrate synthase family. As to quaternary structure, homohexamer.

The enzyme catalyses oxaloacetate + acetyl-CoA + H2O = citrate + CoA + H(+). It participates in carbohydrate metabolism; tricarboxylic acid cycle; isocitrate from oxaloacetate: step 1/2. Allosterically inhibited by NADH. This Salmonella typhimurium (strain LT2 / SGSC1412 / ATCC 700720) protein is Citrate synthase (gltA).